Reading from the N-terminus, the 78-residue chain is Acyl carrier protein (78 aa).

Residues 2–77 (SNIEQQVKKI…LAIDYINAHN (76 aa)) enclose the Carrier domain. An O-(pantetheine 4'-phosphoryl)serine modification is found at Ser37.

It belongs to the acyl carrier protein (ACP) family. In terms of processing, 4'-phosphopantetheine is transferred from CoA to a specific serine of apo-ACP by AcpS. This modification is essential for activity because fatty acids are bound in thioester linkage to the sulfhydryl of the prosthetic group.

It is found in the cytoplasm. It functions in the pathway lipid metabolism; fatty acid biosynthesis. In terms of biological role, carrier of the growing fatty acid chain in fatty acid biosynthesis. This is Acyl carrier protein from Neisseria meningitidis serogroup C / serotype 2a (strain ATCC 700532 / DSM 15464 / FAM18).